The following is an 829-amino-acid chain: MTPKFDIDYVLANITEDDKIALLSGSDFWHTHAIPKFNVPPIRTTDGPNGIRGTKFFAGVPAACLPCGTALGATWDRDLLHQAGVLLGKECLAKGAHCWLGPTINMQRSPLGGRGFESFAEDPHLSGIMAKSIILGCESTGVISTVKHYVGNDQEHERRAVDVLVTPRALREIYLRPFQIVARDAHPGALMTSYNKINGKHVVENPAMLDIVRKDWHWDPLIMSDWLGTYTTIDSLNAGLDLEMPGPTRYRGKYIESAMQARLIKQSTISKRARKVLEFVERASRAPVSADETGRDFPEDRALNRTLCANSIVLLKNDGNLLPIPKTVKKIALIGSHVKTPAISGGGSASLEPYYAVSLYDAVVEALPDAEILYEAGAYAHRMLPVIDRMLSNAVIHFYNEPPEKERTLLATEPVVNTAFQLMDYNAPGLNRALFWATLIGEFTPDVSGLWDFGLTVFGTATLFIDDEMVIDNATRQTRGTAFFGKGTVQEVGQKQLTAGQTYKIRIEFGSANTSPMKAIGVVHFGGGAAHLGACLHMDPEQMVANAVRVAAEADYTIVCTGLNRDWESEGFDRPDMDLPPGIDALISSVLDVAADRTVIVNQSGTPVTMPWAHRARGIVQAWYGGNETGHGIADVLFGDVNPSGKLPLSWPADVRHNPTYLNNMSVGGRMLYGEDVYIGYRFYEKVGREVLFPFGHGLSYTTFHVSPEATVSPIVFSSDSPPTATVLVKNTGPMAGAQTLQLYIAAPNSATPRPVKELHGFTKVFLQSGEERSVSIHIDRYATSFWDEIEDMWKSEEGVYQVLIGTSSQEIVSRGEFRVEQTRYWRGV.

Residue Asn13 is glycosylated (N-linked (GlcNAc...) asparagine). Residue Asp225 is part of the active site. Residues Asn304, Asn473, Asn602, Asn627, and Asn664 are each glycosylated (N-linked (GlcNAc...) asparagine). Positions 389–548 constitute a PA14 domain; that stretch reads RMLSNAVIHF…DPEQMVANAV (160 aa).

It belongs to the glycosyl hydrolase 3 family.

It is found in the secreted. The catalysed reaction is Hydrolysis of terminal, non-reducing beta-D-glucosyl residues with release of beta-D-glucose.. It participates in glycan metabolism; cellulose degradation. Beta-glucosidases are one of a number of cellulolytic enzymes involved in the degradation of cellulosic biomass. Catalyzes the last step releasing glucose from the inhibitory cellobiose. In Aspergillus fumigatus (strain ATCC MYA-4609 / CBS 101355 / FGSC A1100 / Af293) (Neosartorya fumigata), this protein is Probable beta-glucosidase H (bglH).